We begin with the raw amino-acid sequence, 367 residues long: MTQRHLVVMAAGTGGHIIPGLAVAQEMQHRGWTVSWLGTEQGMENRLVPPAAESGIEMDTIAFSGLRGKGLLHTLTGGLRLLGAFAACAKILRRRATTAVLGMGGYVCFPGGLMASLLGKPLILVNADAALLMSNRALKPVADRIAFGFDGAAAATTRQAVVTGNPVRAEIETLPEPPVRYAGREGPLRVLVVGGSLGARVLNETLPQALALLAPAERPRVLHQTGQLNRDGVKEAYAAVGIDDGVEVLAFIDDMAARLAHCDVVICRAGAVTVSELCAAGVASVLVPLIVSTTSHQRDNALYMAQHGAAIHLPQSELTPQALAERLRTLDRPQLLGMAEKARALSRPRAAARVADEIERLVRKDGL.

UDP-N-acetyl-alpha-D-glucosamine-binding positions include 13–15 (TGG), R168, S196, I252, and Q297.

This sequence belongs to the glycosyltransferase 28 family. MurG subfamily.

It is found in the cell inner membrane. It catalyses the reaction di-trans,octa-cis-undecaprenyl diphospho-N-acetyl-alpha-D-muramoyl-L-alanyl-D-glutamyl-meso-2,6-diaminopimeloyl-D-alanyl-D-alanine + UDP-N-acetyl-alpha-D-glucosamine = di-trans,octa-cis-undecaprenyl diphospho-[N-acetyl-alpha-D-glucosaminyl-(1-&gt;4)]-N-acetyl-alpha-D-muramoyl-L-alanyl-D-glutamyl-meso-2,6-diaminopimeloyl-D-alanyl-D-alanine + UDP + H(+). Its pathway is cell wall biogenesis; peptidoglycan biosynthesis. Its function is as follows. Cell wall formation. Catalyzes the transfer of a GlcNAc subunit on undecaprenyl-pyrophosphoryl-MurNAc-pentapeptide (lipid intermediate I) to form undecaprenyl-pyrophosphoryl-MurNAc-(pentapeptide)GlcNAc (lipid intermediate II). This chain is UDP-N-acetylglucosamine--N-acetylmuramyl-(pentapeptide) pyrophosphoryl-undecaprenol N-acetylglucosamine transferase, found in Methylibium petroleiphilum (strain ATCC BAA-1232 / LMG 22953 / PM1).